The following is a 377-amino-acid chain: Chaperone protein DnaJ (377 aa).

A J domain is found at 5–70; it reads DYYEVLGVGR…NKKAAYDQFG (66 aa). Residues 133–211 form a CR-type zinc finger; sequence GLTKELRIPT…CHGDGRVEKT (79 aa). Zn(2+) is bound by residues Cys-146, Cys-149, Cys-163, Cys-166, Cys-185, Cys-188, Cys-199, and Cys-202. CXXCXGXG motif repeat units lie at residues 146–153, 163–170, 185–192, and 199–206; these read CDVCDGSG, CGTCHGQG, CPTCHGRG, and CTKCHGDG.

This sequence belongs to the DnaJ family. As to quaternary structure, homodimer. Requires Zn(2+) as cofactor.

The protein resides in the cytoplasm. Participates actively in the response to hyperosmotic and heat shock by preventing the aggregation of stress-denatured proteins and by disaggregating proteins, also in an autonomous, DnaK-independent fashion. Unfolded proteins bind initially to DnaJ; upon interaction with the DnaJ-bound protein, DnaK hydrolyzes its bound ATP, resulting in the formation of a stable complex. GrpE releases ADP from DnaK; ATP binding to DnaK triggers the release of the substrate protein, thus completing the reaction cycle. Several rounds of ATP-dependent interactions between DnaJ, DnaK and GrpE are required for fully efficient folding. Also involved, together with DnaK and GrpE, in the DNA replication of plasmids through activation of initiation proteins. The chain is Chaperone protein DnaJ from Shewanella sp. (strain MR-4).